The primary structure comprises 359 residues: Protein Wnt-9b (359 aa).

Positions 1-23 are cleaved as a signal peptide; it reads MRPAPALALAALCLLVLPAAAAA. 11 disulfide bridges follow: Cys91–Cys102, Cys137–Cys145, Cys147–Cys164, Cys212–Cys226, Cys214–Cys221, Cys293–Cys318, Cys307–Cys313, Cys317–Cys357, Cys333–Cys348, Cys335–Cys345, and Cys340–Cys341. Asn101 is a glycosylation site (N-linked (GlcNAc...) asparagine). Ser218 carries the O-palmitoleoyl serine; by PORCN lipid modification.

It belongs to the Wnt family. In terms of assembly, forms a soluble 1:1 complex with AFM; this prevents oligomerization and is required for prolonged biological activity. The complex with AFM may represent the physiological form in body fluids. Component of the Wnt-Fzd-LRP5-LRP6 signaling complex that contains a WNT protein, a FZD protein and LRP5 or LRP6. Interacts directly in the complex with LRP6. Interacts with PKD1 (via extracellular domain). In terms of processing, palmitoleoylation is required for efficient binding to frizzled receptors. Depalmitoleoylation leads to Wnt signaling pathway inhibition.

It is found in the secreted. Its subcellular location is the extracellular space. The protein localises to the extracellular matrix. In terms of biological role, ligand for members of the frizzled family of seven transmembrane receptors. Functions in the canonical Wnt/beta-catenin signaling pathway. Required for normal embryonic kidney development, and for normal development of the urogenital tract, including uterus and part of the oviduct and the upper vagina in females, and epididymis and vas deferens in males. Activates a signaling cascade in the metanephric mesenchyme that induces tubulogenesis. Acts upstream of WNT4 in the signaling pathways that mediate development of kidney tubules and the Muellerian ducts. Plays a role in cranofacial development and is required for normal fusion of the palate during embryonic development. In Mus musculus (Mouse), this protein is Protein Wnt-9b (Wnt9b).